The sequence spans 2146 residues: MEDLHRLYLFGDQTISCDEGLRNLLQAKNHTIVASFIERCFHALRQEITRLPPSQRTLFPRFTSIADLLAQHRESGTNPALGSALTCIYQLGCFIDYHGDRGHPYPSSDDGLLGSCTGMLSCTAVSSCKNVGELLPLAVEIVRLTIHLGLCVMRVREMVDSTESSSGSWSILVSEINEADATSLIGNFVKKRGIPPSSQPYISAVGSKGLTISAPPEILDNFIEEGLPKEYKHFKAPGVSGPYHAPHLYNDREIRNILSFCSEDVILRHTPRVPLVSSNTGKLVQVKSMRDLLKVALEEILLRKICWDKVTESCLSIVQATNDKPWRILPIASNATQGLVTALQRMGNCQIEVDTGVGAPQMDPAAPNATGNASRSKIAIIGMSGRFPEADGIEAFWDLLYKGLDVHKKVPPERWDVDAHVDLTGTKRNTSKVPYGCWINEPGLFDARFFNMSPREALQADPAQRLALLSAYEALEMAGFVPNSSPSTQRDRVGIFMGMTSDDYREINSGQDIDTYFIPGGNRAFTPGRINYYFKFSGPSVSVDTACSSSLAAIHLACNAIWRNDCDTAISGGVNLLTNPDNHAGLDRGHFLSRTGNCNTFDDGADGYCRADGVGTIVLKRLEDAEADNDPILGVINAAYTNHSAEAVSITRPHVGAQAFIFNKLLNDTNTNPHEIGYVEMHGTGTQAGDAVEMQSVLDVFAPDYRRGPANSLYLGSAKSNIGHGESASGVTSLVKVLLMLKQNMIPPHCGIKTKINHNFPTDLAQRNVHIAFKPTPWNRPVSGKRKMFINNFSAAGGNTALLMEDAPLREITGQDPRNVHVVSVTARSQTALKRNINALIKYINTHAPSSPANERRFLASLAYTTTARRMHHPFRVTAVGSSVKDIREVLRQRADQDVTTPVPATAPKTGFVFTGQGAQYTGMGKQLYEDCATFRSTIHRLDCIAQSQGFPSILPLIDGSMPVEELSPVVTQLGTTCLQMALVDYWKGLGVTPAFVLGHSLGDYAALNSAGVLSTSDTIYLCGRRAQLLTQQCQMGTHAMLAVKAAVSEIQHLLDPDVHAVACINGPTETVISGLSGRIDELAQQCSSQNLKSTKLKVPFAFHSAQVDPILESFEESAQGVIFHEPAVPFVSALNGEVITESNYSVLGPTYMVKHCREAVNFLGALEATRHAKLMDDATLWVEVGSHPICSGMIKSTFGPQATTVPSLRRDDDPWKILSNSLSTLHLAGVELNWKEFHQDFSSAHEVLELPRYGWDLKNYWIPYTNNFCLTKGGPVTAEVSAPKSTFLTTAAQKIVECREDGNTATLVVENNIAEPELNRVIQGHKVNGVALTPSSLYADIAQTLVDHLITKYKPEYQGLGLDVCDMTVPKPLIAKSGDQFFRVSAVMSWAEQKASVQVWSVNGDGKKMAEHAHCTVKLFNCAERETEWKRNSYLIKRSVSLLQDKAQTGEAHRMQRGMVYKLFAALVDYDENFKAIQEVILDSNEHEATARVKFQAPPGNFHRNPFWIDSFGHLSGFIMNASDATDSKNQVFVNHGWDSMRCLKKFSGDATYQTYVKMQPWKDSIWAGDVYVFEGDDIIAVYGGVKFQALARKILDTVLPPIGGSKTVGAPAPAPARPIGEKKAPPPIKVTGPPKPNPSNARAASPVVARALEILAAEVGLSEAEMTDSLNFADYGVDSLLSLTVTGRYREELNLDLESSVFMDYPTIKDFKAYLAEKGFCDSSSPEPSSEPESKFSFNSDASSEASSGLTTPGITSPVKHEAPKGGQNKVWKSICSIIAEEIGVSVGDIDPSDNLPEMGMDSLLSLTVLGRIRETLGMDLPAEFFLENPTLDAVQAALDLKPKMVPAATPVSEPIRLLETIDNTKPKTSRHPPATSILLQGNPHTATKKLFMFPDGSGSASSYATIPALSPDVCVYGLNCPYMKTPQNLTCSLDELTEPYLAEIRRRQPKGPYSFGGWSAGGICAFDAARQLILEEGEEVERLLLLDSPFPIGLEKLPPRLYKFFNSIGLFGDGKRAPPDWLLPHFLAFIDSLDAYKAVPLPFNDSKWAKKMPKTYLIWAKDGVCGKPGDPRPEPAEDGSEDPREMQWLLNDRTDLGPNKWDTLVGPQNIGGIHVMEDANHFTMTTGQKAKELSQFMATAMSS.

The interval 8 to 244 is N-terminal acylcarrier protein transacylase domain (SAT); it reads YLFGDQTISC…KAPGVSGPYH (237 aa). One can recognise a Ketosynthase family 3 (KS3) domain in the interval 375–806; it reads RSKIAIIGMS…GGNTALLMED (432 aa). Active-site for beta-ketoacyl synthase activity residues include Cys-547, His-682, and His-724. The malonyl-CoA:ACP transacylase (MAT) domain stretch occupies residues 911 to 1232; that stretch reads GFVFTGQGAQ…LSTLHLAGVE (322 aa). Ser-1001 (for acyl/malonyl transferase activity) is an active-site residue. Positions 1290 to 1602 are product template (PT) domain; that stretch reads TTAAQKIVEC…ARKILDTVLP (313 aa). The segment at 1294–1427 is N-terminal hotdog fold; the sequence is QKIVECREDG…VKLFNCAERE (134 aa). Residues 1294-1598 enclose the PKS/mFAS DH domain; that stretch reads QKIVECREDG…FQALARKILD (305 aa). His-1326 functions as the Proton acceptor; for dehydratase activity in the catalytic mechanism. Residues 1453 to 1598 are C-terminal hotdog fold; the sequence is AHRMQRGMVY…FQALARKILD (146 aa). Asp-1511 serves as the catalytic Proton donor; for dehydratase activity. Residues 1611-1644 are disordered; it reads GAPAPAPARPIGEKKAPPPIKVTGPPKPNPSNAR. Pro residues predominate over residues 1627–1639; the sequence is PPPIKVTGPPKPN. Residues 1647–1721 enclose the Carrier 1 domain; sequence SPVVARALEI…DFKAYLAEKG (75 aa). Ser-1681 carries the post-translational modification O-(pantetheine 4'-phosphoryl)serine. Residues 1724-1769 are disordered; sequence DSSSPEPSSEPESKFSFNSDASSEASSGLTTPGITSPVKHEAPKGG. Low complexity predominate over residues 1738 to 1750; that stretch reads FSFNSDASSEASS. Residues 1768–1845 enclose the Carrier 2 domain; the sequence is GGQNKVWKSI…AVQAALDLKP (78 aa). Position 1805 is an O-(pantetheine 4'-phosphoryl)serine (Ser-1805). The claisen cyclase domain stretch occupies residues 1892-2019; that stretch reads KLFMFPDGSG…SIGLFGDGKR (128 aa). The For Claisen cyclase activity role is filled by Ser-1962.

Its subcellular location is the endosome. It catalyses the reaction 6 malonyl-CoA + acetyl-CoA + 6 H(+) = naphtopyrone YWA1 + 6 CO2 + 7 CoA + H2O. It functions in the pathway pigment biosynthesis; melanin biosynthesis. In terms of biological role, non-reducing polyketide synthase; part of the gene cluster that mediates the biosynthesis of dihydroxynaphthalene (DHN)-melanin, a bluish-green pigment and a structural component of the conidial wall. The first step of the pathway is the production of the heptaketide naphtopyrone YWA1 by the polyketide synthase alb1 though condensation of acetyl-CoA with malonyl-CoA. The naphtopyrone YWA1 is then converted to the pentaketide 1,3,6,8-tetrahydroxynaphthalene (1,3,6,8-THN) by the heptaketide hydrolyase ayg1 though chain-length shortening. 1,3,6,8-THN is substrate of the hydroxynaphthalene reductase arp2 to yield scytalone. The scytalone dehydratase arp1 then reduces scytalone to 1,3,8-THN. 1,3,8-THN is also substrate of the hydroxynaphthalene reductase arp2 to yield vermelone. Vermelone is further converted by the multicopper oxidase abr1 to 1,8-DHN. Finally the laccase abr2 transforms 1,8-DHN to DHN-melanin. DHN-melanin biosynthesis appears to be initiated in endosomes where early enzymes (abl1, ayg1, arp1 and arp2) localize, with exocytosis leading to melanin deposition on the cell surface where late enzymes (abr1 and abr2) localize. DHN-melanin is an important structural component of the outer cell wall and is required for the presence of conidial surface hydrophobins. DHN-melanin also plays a crucial role in fungal virulence, including a protective role against the host's immune defenses. DHN-melanin protects also conidia against amoeba predation. This Aspergillus fumigatus (strain ATCC MYA-4609 / CBS 101355 / FGSC A1100 / Af293) (Neosartorya fumigata) protein is Conidial pigment polyketide synthase alb1.